Consider the following 285-residue polypeptide: Catechol-2,3-dioxygenase (285 aa).

VOC domains lie at 9-126 (HIGY…MYAD) and 169-285 (IIGH…TFVI). Residues H213 and E264 each coordinate Fe cation.

Belongs to the extradiol ring-cleavage dioxygenase family. Fe(2+) serves as cofactor.

The enzyme catalyses catechol + O2 = (2Z,4E)-2-hydroxy-6-oxohexa-2,4-dienoate + H(+). Involved in the meta cleavage of catechol to 2-hydroxymuconic semialdehyde. Essential for growth and viability in the presence of catechol and probably involved in the detoxification of catechol. The chain is Catechol-2,3-dioxygenase (catE) from Bacillus subtilis (strain 168).